Consider the following 422-residue polypeptide: L-threonine dehydratase biosynthetic IlvA (422 aa).

K56 carries the post-translational modification N6-(pyridoxal phosphate)lysine. Pyridoxal 5'-phosphate-binding positions include N83, 189-193 (GGGGL), and S315. Residues 339-413 (HYFILNFPQR…FDPSNIYINE (75 aa)) enclose the ACT-like domain.

The protein belongs to the serine/threonine dehydratase family. Homotetramer. The cofactor is pyridoxal 5'-phosphate.

It catalyses the reaction L-threonine = 2-oxobutanoate + NH4(+). It participates in amino-acid biosynthesis; L-isoleucine biosynthesis; 2-oxobutanoate from L-threonine: step 1/1. Functionally, catalyzes the anaerobic formation of alpha-ketobutyrate and ammonia from threonine in a two-step reaction. The first step involved a dehydration of threonine and a production of enamine intermediates (aminocrotonate), which tautomerizes to its imine form (iminobutyrate). Both intermediates are unstable and short-lived. The second step is the nonenzymatic hydrolysis of the enamine/imine intermediates to form 2-ketobutyrate and free ammonia. In the low water environment of the cell, the second step is accelerated by RidA. The chain is L-threonine dehydratase biosynthetic IlvA (ilvA) from Staphylococcus aureus (strain MSSA476).